A 192-amino-acid polypeptide reads, in one-letter code: Archaemetzincin (192 aa).

H137 contributes to the Zn(2+) binding site. E138 serves as the catalytic Proton acceptor. The Zn(2+) site is built by H141, H147, C148, C153, C172, and C175.

The protein belongs to the peptidase M54 family. As to quaternary structure, monomer. The cofactor is Zn(2+).

Functionally, probable zinc metalloprotease whose natural substrate is unknown. The protein is Archaemetzincin of Pyrococcus furiosus (strain ATCC 43587 / DSM 3638 / JCM 8422 / Vc1).